Reading from the N-terminus, the 178-residue chain is Large ribosomal subunit protein uL6 (178 aa).

Belongs to the universal ribosomal protein uL6 family. As to quaternary structure, part of the 50S ribosomal subunit.

This protein binds to the 23S rRNA, and is important in its secondary structure. It is located near the subunit interface in the base of the L7/L12 stalk, and near the tRNA binding site of the peptidyltransferase center. The sequence is that of Large ribosomal subunit protein uL6 from Helicobacter pylori (strain HPAG1).